The sequence spans 256 residues: Diacetyl reductase [(S)-acetoin forming] (256 aa).

Residues 6-33 (LVTG…AIAD) and Asp59 each bind NAD(+). Ser139 is a binding site for substrate. The Proton acceptor role is filled by Tyr152. Lys156 contributes to the NAD(+) binding site.

Belongs to the short-chain dehydrogenases/reductases (SDR) family. In terms of assembly, homotetramer.

It catalyses the reaction (S)-acetoin + NAD(+) = diacetyl + NADH + H(+). Catalyzes the reversible reduction of (S)-acetoin to 2,3-butanediol in the presence of NADH. This Klebsiella pneumoniae protein is Diacetyl reductase [(S)-acetoin forming] (budC).